The primary structure comprises 185 residues: UPF0669 protein C6orf120 homolog (185 aa).

Residues 1–23 (MAARWRRILIVFVAAQVLCLVNT) form the signal peptide. Residue N47 is glycosylated (N-linked (GlcNAc...) asparagine).

Belongs to the UPF0669 family.

Its subcellular location is the secreted. This Gallus gallus (Chicken) protein is UPF0669 protein C6orf120 homolog.